A 604-amino-acid polypeptide reads, in one-letter code: Hemagglutinin glycoprotein (604 aa).

Topologically, residues 1 to 37 are intravirion; it reads MLPYQDKVGAFYKDNARANSTKLSLVTEGHGGRRPPY. The chain crosses the membrane as a helical span at residues 38-58; sequence LLFVLLILLVGILALLAITGV. The Virion surface segment spans residues 59-604; it reads RFHQVSTSNM…LVRIRFSCNR (546 aa). N149, N422, and N587 each carry an N-linked (GlcNAc...) asparagine; by host glycan.

Belongs to the paramyxoviruses hemagglutinin-neuraminidase family. Non-sialidase subfamily. In terms of assembly, binds canine SLAMF1 at the cell surface.

The protein localises to the virion membrane. It is found in the host cell membrane. Attaches the virus to cell receptors and thereby initiating infection. Binding of H protein to the receptor induces a conformational change that allows the F protein to trigger virion/cell membranes fusion. The cellular receptor might be SLAM, and may explain the lymphotropism of the virus. This is Hemagglutinin glycoprotein (H) from Ailuropoda melanoleuca (Giant panda).